A 219-amino-acid chain; its full sequence is MSTVDILSPAGEKTGSVELPAEIFGVEKISIPLIHQVVVAQNAAARQGTHKTKRRGEVRGGGKKPYRQKGTGRARQGSTRAPQFAGGGVVHGPQPRDYSQRTPKKMKAAALRHALTDRARHNRIHVVTGVIEGENPSTKAARTLFGKISERKNLLLVVDRADEAAWLSARNLPQIHILEPGQLNTYDVLVSDDVVFTQAAFESFVSGPNKAVDTEGSEA.

Residues 43 to 101 (AAARQGTHKTKRRGEVRGGGKKPYRQKGTGRARQGSTRAPQFAGGGVVHGPQPRDYSQR) are disordered. The span at 61–72 (GGKKPYRQKGTG) shows a compositional bias: basic residues.

The protein belongs to the universal ribosomal protein uL4 family. In terms of assembly, part of the 50S ribosomal subunit.

In terms of biological role, one of the primary rRNA binding proteins, this protein initially binds near the 5'-end of the 23S rRNA. It is important during the early stages of 50S assembly. It makes multiple contacts with different domains of the 23S rRNA in the assembled 50S subunit and ribosome. Its function is as follows. Forms part of the polypeptide exit tunnel. The polypeptide is Large ribosomal subunit protein uL4 (Streptomyces coelicolor (strain ATCC BAA-471 / A3(2) / M145)).